Here is a 160-residue protein sequence, read N- to C-terminus: Sulfur-rich protein (160 aa).

2 helical membrane passes run 63–83 (ITMV…TFVL) and 92–112 (FLFL…SVCM).

It localises to the membrane. The polypeptide is Sulfur-rich protein (srp) (Chlamydophila psittaci (strain ATCC VR-125 / 6BC) (Chlamydia psittaci)).